We begin with the raw amino-acid sequence, 728 residues long: Ribosome biogenesis protein bop1-B (728 aa).

Positions 1–114 are disordered; sequence MKRGSKRESG…ENDSSDEEDI (114 aa). Over residues 50-67 the composition is skewed to acidic residues; that stretch reads SGTDSSDDEEDHSSEEVQ. WD repeat units follow at residues 393–432, 434–474, 514–556, 559–597, 600–639, 643–682, and 698–728; these read GHKD…CMKS, VLEG…RLLC, KHQK…SQNP, KNKG…LTKK, TNCK…KPYK, HHKK…DLLQ, and HRDL…RLFT.

This sequence belongs to the WD repeat BOP1/ERB1 family. Component of the PeBoW complex, composed of bop1, pes1 and wdr12. The complex is held together by bop1, which interacts with pes1 via its N-terminal domain and with wdr12 via a high-affinity interaction between the seven-bladed beta-propeller domains of the 2 proteins. The PeBoW complex associates with the 66S pre-ribosome.

Its subcellular location is the nucleus. It localises to the nucleolus. The protein resides in the nucleoplasm. In terms of biological role, component of the PeBoW complex, which is required for maturation of 28S and 5.8S ribosomal RNAs and formation of the 60S ribosome. The protein is Ribosome biogenesis protein bop1-B (bop1-b) of Xenopus laevis (African clawed frog).